The primary structure comprises 324 residues: D-alanine--D-alanine ligase (324 aa).

An ATP-grasp domain is found at 121–321 (NQYLKGFGIR…IKDVMTDIIE (201 aa)). 149 to 204 (INKIGLPCFIKPNAGGSSFGVTKVKTKEDIQPAIEKAFEESDEVMIEAFMKGTEIT) lines the ATP pocket. The Mg(2+) site is built by D275, E288, and N290.

It belongs to the D-alanine--D-alanine ligase family. Mg(2+) is required as a cofactor. The cofactor is Mn(2+).

Its subcellular location is the cytoplasm. It catalyses the reaction 2 D-alanine + ATP = D-alanyl-D-alanine + ADP + phosphate + H(+). The protein operates within cell wall biogenesis; peptidoglycan biosynthesis. Cell wall formation. The chain is D-alanine--D-alanine ligase from Phocaeicola vulgatus (strain ATCC 8482 / DSM 1447 / JCM 5826 / CCUG 4940 / NBRC 14291 / NCTC 11154) (Bacteroides vulgatus).